The sequence spans 138 residues: UPF0201 protein TK1335 (138 aa).

Belongs to the UPF0201 family.

This chain is UPF0201 protein TK1335, found in Thermococcus kodakarensis (strain ATCC BAA-918 / JCM 12380 / KOD1) (Pyrococcus kodakaraensis (strain KOD1)).